A 98-amino-acid chain; its full sequence is Large ribosomal subunit protein uL23 (98 aa).

Belongs to the universal ribosomal protein uL23 family. In terms of assembly, part of the 50S ribosomal subunit. Contacts protein L29, and trigger factor when it is bound to the ribosome.

Functionally, one of the early assembly proteins it binds 23S rRNA. One of the proteins that surrounds the polypeptide exit tunnel on the outside of the ribosome. Forms the main docking site for trigger factor binding to the ribosome. The polypeptide is Large ribosomal subunit protein uL23 (Methylorubrum extorquens (strain CM4 / NCIMB 13688) (Methylobacterium extorquens)).